Consider the following 120-residue polypeptide: uncharacterized protein (120 aa).

To M.jannaschii MJ0361.

This is an uncharacterized protein from Methanocaldococcus jannaschii (strain ATCC 43067 / DSM 2661 / JAL-1 / JCM 10045 / NBRC 100440) (Methanococcus jannaschii).